A 371-amino-acid chain; its full sequence is ATP-dependent protease ATP-binding subunit-like protein AmiB (371 aa).

Residue 96–103 (GPTGVGKT) participates in ATP binding.

Belongs to the ClpX chaperone family. Mg(2+) is required as a cofactor.

Its function is as follows. Unlikely to encode a regulatory protein. Has ATPase activity. AmiB and AmiS may act jointly into a two component ABC transporter system. The polypeptide is ATP-dependent protease ATP-binding subunit-like protein AmiB (amiB) (Pseudomonas aeruginosa (strain ATCC 15692 / DSM 22644 / CIP 104116 / JCM 14847 / LMG 12228 / 1C / PRS 101 / PAO1)).